Here is a 474-residue protein sequence, read N- to C-terminus: ATP synthase subunit beta 2 (474 aa).

157–164 (GGAGVGKT) serves as a coordination point for ATP.

Belongs to the ATPase alpha/beta chains family. In terms of assembly, F-type ATPases have 2 components, CF(1) - the catalytic core - and CF(0) - the membrane proton channel. CF(1) has five subunits: alpha(3), beta(3), gamma(1), delta(1), epsilon(1). CF(0) has three main subunits: a(1), b(2) and c(9-12). The alpha and beta chains form an alternating ring which encloses part of the gamma chain. CF(1) is attached to CF(0) by a central stalk formed by the gamma and epsilon chains, while a peripheral stalk is formed by the delta and b chains.

The protein resides in the cell inner membrane. The catalysed reaction is ATP + H2O + 4 H(+)(in) = ADP + phosphate + 5 H(+)(out). In terms of biological role, produces ATP from ADP in the presence of a proton gradient across the membrane. The catalytic sites are hosted primarily by the beta subunits. The protein is ATP synthase subunit beta 2 of Polaromonas naphthalenivorans (strain CJ2).